Reading from the N-terminus, the 248-residue chain is UPF0246 protein RF_0769 (248 aa).

The protein belongs to the UPF0246 family.

The sequence is that of UPF0246 protein RF_0769 from Rickettsia felis (strain ATCC VR-1525 / URRWXCal2) (Rickettsia azadi).